The following is a 160-amino-acid chain: Transcriptional repressor NrdR (160 aa).

A zinc finger spans residues 3–34 (CPFCRHADTQVVDSRVSEDGATIRRRRRCPAC). One can recognise an ATP-cone domain in the interval 49 to 139 (PSVVKKDGSR…VYRRFEDVSE (91 aa)).

The protein belongs to the NrdR family. Zn(2+) is required as a cofactor.

Its function is as follows. Negatively regulates transcription of bacterial ribonucleotide reductase nrd genes and operons by binding to NrdR-boxes. In Paraburkholderia phytofirmans (strain DSM 17436 / LMG 22146 / PsJN) (Burkholderia phytofirmans), this protein is Transcriptional repressor NrdR.